Reading from the N-terminus, the 434-residue chain is MTEFFADIAPVRYEGPDSANPLAFRHYDPDEMVMGKRMEDHLRFAVAYWHSFAWEGGDPFGGQTLIRPWHPQDDMTRAKVKADAAFEMFDILGVPYFCWHDADIRPEAATFAESLRNFEEIIDHFLAKMESRRTRLLWGTANMFSHRRWMAGASTNPDPDVFAYAAATVKTCLDATQRMGGQNYVLWGGREGYETLLNTDMGRELDHMGRFLSMVVDYKHKIGFKGAILVEPKPQEPSKHQYDFDAATCIGFLRKYGLEGEVKLNLEQGHAILAGHSFEHEIAVAASEGMLGSIDMNRNDYQSGWDTDQFPNNVPEVALCYYHILRAGGFTTGGTNFDAKLRRQSLDATDLIAAHVGGMDICARGLKAAAAMIEDGGLETALRDRYAGWDSDHGQGILESDLDSLFARVLAGEIDPQPHSGRQEMLENHVNRFV.

Residues His100 and Asp103 contribute to the active site. Positions 231, 267, 270, 295, 306, 308, and 338 each coordinate Mg(2+).

This sequence belongs to the xylose isomerase family. Homotetramer. Mg(2+) is required as a cofactor.

The protein resides in the cytoplasm. It catalyses the reaction alpha-D-xylose = alpha-D-xylulofuranose. This is Xylose isomerase from Ruegeria pomeroyi (strain ATCC 700808 / DSM 15171 / DSS-3) (Silicibacter pomeroyi).